Consider the following 475-residue polypeptide: Ribulose bisphosphate carboxylase large chain (475 aa).

Positions 1–2 (MS) are excised as a propeptide. Position 3 is an N-acetylproline (P3). N6,N6,N6-trimethyllysine is present on K14. Residues N123 and T173 each contribute to the substrate site. K175 serves as the catalytic Proton acceptor. Position 177 (K177) interacts with substrate. Mg(2+) is bound by residues K201, D203, and E204. K201 carries the N6-carboxylysine modification. H294 acts as the Proton acceptor in catalysis. Positions 295, 327, and 379 each coordinate substrate.

The protein belongs to the RuBisCO large chain family. Type I subfamily. In terms of assembly, heterohexadecamer of 8 large chains and 8 small chains; disulfide-linked. The disulfide link is formed within the large subunit homodimers. Mg(2+) is required as a cofactor. In terms of processing, the disulfide bond which can form in the large chain dimeric partners within the hexadecamer appears to be associated with oxidative stress and protein turnover.

Its subcellular location is the plastid. The protein resides in the chloroplast. It carries out the reaction 2 (2R)-3-phosphoglycerate + 2 H(+) = D-ribulose 1,5-bisphosphate + CO2 + H2O. The enzyme catalyses D-ribulose 1,5-bisphosphate + O2 = 2-phosphoglycolate + (2R)-3-phosphoglycerate + 2 H(+). In terms of biological role, ruBisCO catalyzes two reactions: the carboxylation of D-ribulose 1,5-bisphosphate, the primary event in carbon dioxide fixation, as well as the oxidative fragmentation of the pentose substrate in the photorespiration process. Both reactions occur simultaneously and in competition at the same active site. This chain is Ribulose bisphosphate carboxylase large chain, found in Liquidambar styraciflua (Sweetgum tree).